Consider the following 354-residue polypeptide: DNA repair protein rhp57 (354 aa).

100–107 is a binding site for ATP; that stretch reads GESGSGKS.

Belongs to the RecA family.

Its subcellular location is the nucleus. Functionally, involved in recombination DNA repair and in the repair of gamma-ray-induced damage. This chain is DNA repair protein rhp57 (rhp57), found in Schizosaccharomyces pombe (strain 972 / ATCC 24843) (Fission yeast).